The following is a 541-amino-acid chain: Effector protein hopAB1 (541 aa).

3 disordered regions span residues 1 to 94 (MPGI…EAQQ), 168 to 222 (QRAL…RHPQ), and 317 to 338 (RQTT…SGRR). Positions 18–31 (TDGEPVTEREHDSS) are enriched in basic and acidic residues. A compositionally biased stretch (low complexity) spans 183–196 (SSSGSSQRSLIGRS).

It belongs to the HopAB family.

The protein localises to the secreted. Effector protein that plays different roles depending on the species and plant cultivars that interact with the pathogen. Acts as a virulence determinant by enhancing the development of disease symptoms and bacterial growth. Acts as an avirulence factor by eliciting hypersensitive response (HR) and plant resistance. This is Effector protein hopAB1 (hopAB1) from Pseudomonas savastanoi (Pseudomonas syringae pv. savastanoi).